Consider the following 428-residue polypeptide: Phosphomethylpyrimidine synthase (428 aa).

Residues Asn66, Met95, Tyr124, His163, 185–187 (SRG), 226–229 (DGLR), and Glu265 each bind substrate. His269 provides a ligand contact to Zn(2+). Tyr292 lines the substrate pocket. His333 contributes to the Zn(2+) binding site. Residues Cys407, Cys410, and Cys414 each coordinate [4Fe-4S] cluster.

It belongs to the ThiC family. [4Fe-4S] cluster serves as cofactor.

The catalysed reaction is 5-amino-1-(5-phospho-beta-D-ribosyl)imidazole + S-adenosyl-L-methionine = 4-amino-2-methyl-5-(phosphooxymethyl)pyrimidine + CO + 5'-deoxyadenosine + formate + L-methionine + 3 H(+). It functions in the pathway cofactor biosynthesis; thiamine diphosphate biosynthesis. Functionally, catalyzes the synthesis of the hydroxymethylpyrimidine phosphate (HMP-P) moiety of thiamine from aminoimidazole ribotide (AIR) in a radical S-adenosyl-L-methionine (SAM)-dependent reaction. The sequence is that of Phosphomethylpyrimidine synthase from Thermococcus kodakarensis (strain ATCC BAA-918 / JCM 12380 / KOD1) (Pyrococcus kodakaraensis (strain KOD1)).